The primary structure comprises 392 residues: DNA polymerase IV (392 aa).

The UmuC domain maps to 6–186 (IVHLDADAFF…LPIGKLPGVG (181 aa)). 2 residues coordinate Mg(2+): aspartate 10 and aspartate 103. The active site involves glutamate 104.

It belongs to the DNA polymerase type-Y family. Monomer. The cofactor is Mg(2+).

Its subcellular location is the cytoplasm. It catalyses the reaction DNA(n) + a 2'-deoxyribonucleoside 5'-triphosphate = DNA(n+1) + diphosphate. In terms of biological role, poorly processive, error-prone DNA polymerase involved in untargeted mutagenesis. Copies undamaged DNA at stalled replication forks, which arise in vivo from mismatched or misaligned primer ends. These misaligned primers can be extended by PolIV. Exhibits no 3'-5' exonuclease (proofreading) activity. May be involved in translesional synthesis, in conjunction with the beta clamp from PolIII. This Opitutus terrae (strain DSM 11246 / JCM 15787 / PB90-1) protein is DNA polymerase IV.